A 186-amino-acid polypeptide reads, in one-letter code: Ribulose bisphosphate carboxylase small subunit, chloroplastic 6 (186 aa).

Residues 1–60 (MASSMLSNAAVATTAASRSAGAQASMVAPFTGLKSVSAFPVTRKSSNDLSTVPSNGGKVQ) constitute a chloroplast transit peptide.

Belongs to the RuBisCO small chain family. Heterohexadecamer of 8 large and 8 small subunits.

The protein resides in the plastid. It is found in the chloroplast. Functionally, ruBisCO catalyzes two reactions: the carboxylation of D-ribulose 1,5-bisphosphate, the primary event in carbon dioxide fixation, as well as the oxidative fragmentation of the pentose substrate. Both reactions occur simultaneously and in competition at the same active site. Although the small subunit is not catalytic it is essential for maximal activity. The protein is Ribulose bisphosphate carboxylase small subunit, chloroplastic 6 of Mesembryanthemum crystallinum (Common ice plant).